The primary structure comprises 82 residues: Putative membrane protein insertion efficiency factor (82 aa).

The protein belongs to the UPF0161 family.

The protein resides in the cell inner membrane. Could be involved in insertion of integral membrane proteins into the membrane. The polypeptide is Putative membrane protein insertion efficiency factor (Francisella tularensis subsp. novicida (strain U112)).